A 58-amino-acid chain; its full sequence is Large ribosomal subunit protein uL30 (58 aa).

This sequence belongs to the universal ribosomal protein uL30 family. Part of the 50S ribosomal subunit.

The sequence is that of Large ribosomal subunit protein uL30 from Porphyromonas gingivalis (strain ATCC 33277 / DSM 20709 / CIP 103683 / JCM 12257 / NCTC 11834 / 2561).